The sequence spans 187 residues: Small ribosomal subunit protein uS5 (187 aa).

Residues 21 to 84 form the S5 DRBM domain; sequence MVDKLVHINR…ESAKRDMIFV (64 aa).

Belongs to the universal ribosomal protein uS5 family. In terms of assembly, part of the 30S ribosomal subunit. Contacts proteins S4 and S8.

Functionally, with S4 and S12 plays an important role in translational accuracy. Located at the back of the 30S subunit body where it stabilizes the conformation of the head with respect to the body. This chain is Small ribosomal subunit protein uS5, found in Mesorhizobium japonicum (strain LMG 29417 / CECT 9101 / MAFF 303099) (Mesorhizobium loti (strain MAFF 303099)).